The following is a 491-amino-acid chain: NADH-ubiquinone oxidoreductase chain 2 (491 aa).

Helical transmembrane passes span 11–31 (MIKY…SISI), 38–58 (VHII…VIGI), 74–94 (ELIK…IKMF), 106–126 (ITDE…ISME), 129–149 (NLIT…ILAL), 161–181 (LKYY…IVSI), 210–230 (IALI…HGWL), 238–258 (GMLM…MVLI), 270–290 (AIMF…VGTI), 298–318 (LIRF…LMLA), 330–350 (VYYL…IMGF), 375–395 (GAIV…MTNF), 411–433 (VYLT…NLVK), and 463–483 (IVLG…ILNV).

This sequence belongs to the complex I subunit 2 family.

Its subcellular location is the mitochondrion inner membrane. The enzyme catalyses a ubiquinone + NADH + 5 H(+)(in) = a ubiquinol + NAD(+) + 4 H(+)(out). Core subunit of the mitochondrial membrane respiratory chain NADH dehydrogenase (Complex I) that is believed to belong to the minimal assembly required for catalysis. Complex I functions in the transfer of electrons from NADH to the respiratory chain. The immediate electron acceptor for the enzyme is believed to be ubiquinone. This is NADH-ubiquinone oxidoreductase chain 2 (nad2) from Dictyostelium citrinum (Slime mold).